Here is a 1006-residue protein sequence, read N- to C-terminus: Unconventional myosin-Id (1006 aa).

An N-acetylalanine modification is found at Ala-2. The 687-residue stretch at 9–695 (FGKADFVLMD…TLFTLEELRA (687 aa)) folds into the Myosin motor domain. 102 to 109 (GESGAGKT) contacts ATP. Ser-200 carries the post-translational modification Phosphoserine. Tyr-536 carries the post-translational modification Phosphotyrosine. Residues 572 to 594 (MIALVDNLASKEPYYVRCIKPND) form an actin-binding region. IQ domains follow at residues 699–719 (VRVV…MRYK) and 721–741 (TKAA…SYIH). The interaction with calmodulin stretch occupies residues 776–896 (LQSIFNRWRA…MDPTKQYKVM (121 aa)). The region spanning 812–1005 (GQRADLGLQR…RSGFILSVPG (194 aa)) is the TH1 domain.

This sequence belongs to the TRAFAC class myosin-kinesin ATPase superfamily. Myosin family. In terms of assembly, interacts (via the two IQ motifs) with calmodulin. Binds an additional calmodulin chain via a third, C-terminal region. Interacts with F-actin. Detected on tracheal epithelial cells, and on epithelial cells and brush border cells in duodenum, jejunum and ileum. Detected on myelinated white matter in the cerebellum, and the myelinated part of the optic nerve. Detected on mature oligodendrocites. Detected on the outside of the myelin sheet that surrounds axons (at protein level). Ubiquitous. Highest levels in adult brain, and spinal cord. Moderate levels in lung, kidney, liver and spleen. Low levels in testis and heart (at protein level).

The protein localises to the cytoplasm. The protein resides in the perikaryon. Its subcellular location is the cell projection. It is found in the dendrite. It localises to the early endosome. The protein localises to the cell cortex. Unconventional myosin that functions as actin-based motor protein with ATPase activity. Plays a role in endosomal protein trafficking, and especially in the transfer of cargo proteins from early to recycling endosomes. Required for normal planar cell polarity in ciliated tracheal cells, for normal rotational polarity of cilia, and for coordinated, unidirectional ciliary movement in the trachea. Required for normal, polarized cilia organization in brain ependymal epithelial cells. The chain is Unconventional myosin-Id (Myo1d) from Rattus norvegicus (Rat).